The chain runs to 455 residues: Yop proteins translocation protein P (455 aa).

Disordered stretches follow at residues 38–82 (NKGN…QPGR) and 430–455 (DFQA…EAEE). Basic and acidic residues-rich tracts occupy residues 43–69 (HPKE…DGLR) and 439–449 (QESRQKRHVYE).

It belongs to the SpaN family.

The protein localises to the cytoplasm. In terms of biological role, component of the yop secretion machinery. The polypeptide is Yop proteins translocation protein P (yscP) (Yersinia pseudotuberculosis serotype I (strain IP32953)).